The following is a 310-amino-acid chain: tRNA-cytidine(32) 2-sulfurtransferase (310 aa).

The short motif at 45-50 (SGGKDS) is the PP-loop motif element. The [4Fe-4S] cluster site is built by Cys-120, Cys-123, and Cys-211.

The protein belongs to the TtcA family. Homodimer. Mg(2+) is required as a cofactor. The cofactor is [4Fe-4S] cluster.

Its subcellular location is the cytoplasm. The enzyme catalyses cytidine(32) in tRNA + S-sulfanyl-L-cysteinyl-[cysteine desulfurase] + AH2 + ATP = 2-thiocytidine(32) in tRNA + L-cysteinyl-[cysteine desulfurase] + A + AMP + diphosphate + H(+). It participates in tRNA modification. Functionally, catalyzes the ATP-dependent 2-thiolation of cytidine in position 32 of tRNA, to form 2-thiocytidine (s(2)C32). The sulfur atoms are provided by the cysteine/cysteine desulfurase (IscS) system. The sequence is that of tRNA-cytidine(32) 2-sulfurtransferase from Shewanella sp. (strain ANA-3).